Consider the following 378-residue polypeptide: 3,6-diketocamphane 1,6-monooxygenase (378 aa).

Residues His-10, Ser-44, Met-76, and 201–209 (TGFSYNSPS) each bind FMN.

This sequence belongs to the bacterial luciferase oxidoreductase family. In terms of assembly, homodimer. Likely forms a loose transient complex with a P.putida flavin reductase that provides the required FMNH(2) to the enzyme.

The enzyme catalyses (1S,4S)-bornane-2,5-dione + FMNH2 + O2 = (1S,4S)-5-oxo-1,2-campholide + FMN + H2O + H(+). Its function is as follows. Involved in the degradation and assimilation of (-)-camphor, which allows P.putida strain NCIMB 10007 to grow on this enantiomer of camphor as the sole carbon source. Catalyzes the FMNH(2)-dependent lactonization of 3,6-diketocamphane via a Baeyer-Villiger oxidation to produce the unstable lactone 5-oxo-1,2-campholide with (S,S) configuration, that presumably undergoes spontaneous hydrolysis to form 2-oxo-Delta(3)-4,5,5-trimethylcyclopentenylacetate. Is also able to convert (-)-camphor to the corresponding lactone in vitro. Shows no conversion of (+)-camphor, (+)-fenchone, (-)-fenchone, and (+)-nopinone. Acts on other bicyclic ketones but very poorly on a few 2- and 4-substituted monocyclic ketones. This chain is 3,6-diketocamphane 1,6-monooxygenase, found in Pseudomonas putida (Arthrobacter siderocapsulatus).